We begin with the raw amino-acid sequence, 142 residues long: Protein SprT-like (142 aa).

The SprT-like domain maps to 4-138 (YVKKVSIEDF…FACGYCHGRL (135 aa)). His62 lines the Zn(2+) pocket. The active site involves Glu63. His66 lines the Zn(2+) pocket.

The protein belongs to the SprT family. Zn(2+) is required as a cofactor.

It localises to the cytoplasm. In Streptococcus agalactiae serotype Ia (strain ATCC 27591 / A909 / CDC SS700), this protein is Protein SprT-like.